Consider the following 164-residue polypeptide: I-Kappa-B like protein F1 (164 aa).

3 ANK repeats span residues 57-89 (HGRQ…NINA), 94-124 (TGNT…DLGA), and 128-157 (QQET…AYNN).

It belongs to the polydnaviridae I-Kappa-B-like protein family.

Functionally, suppresses the host immune response through NF-kappa-B inactivation. Possesses ankyrin repeat domains required for NF-kappa-B binding but lacks the regulatory regions required for dissociation from NF-kappa-B and degradation. Therefore, prevents host NF-kappa-B release and subsequent activation. This is I-Kappa-B like protein F1 (F2) from Microplitis demolitor bracovirus (isolate Webb) (MdBV).